A 438-amino-acid polypeptide reads, in one-letter code: Glucose-6-phosphate isomerase (438 aa).

The Proton donor role is filled by Glu-289. Residues His-310 and Lys-424 contribute to the active site.

Belongs to the GPI family.

The protein resides in the cytoplasm. The catalysed reaction is alpha-D-glucose 6-phosphate = beta-D-fructose 6-phosphate. Its pathway is carbohydrate biosynthesis; gluconeogenesis. The protein operates within carbohydrate degradation; glycolysis; D-glyceraldehyde 3-phosphate and glycerone phosphate from D-glucose: step 2/4. Functionally, catalyzes the reversible isomerization of glucose-6-phosphate to fructose-6-phosphate. This Oenococcus oeni (strain ATCC BAA-331 / PSU-1) protein is Glucose-6-phosphate isomerase.